Here is a 400-residue protein sequence, read N- to C-terminus: Mu-type opioid receptor (400 aa).

Topologically, residues 1-68 are extracellular; sequence MDSSAAPTNA…CPPTGSPSMI (68 aa). Residues N9, N12, N33, N40, and N48 are each glycosylated (N-linked (GlcNAc...) asparagine). Residues 69–93 traverse the membrane as a helical segment; that stretch reads TAITIMALYSIVCVVGLFGNFLVMY. The Cytoplasmic segment spans residues 94–106; that stretch reads VIVRYTKMKTATN. Residues 107–131 traverse the membrane as a helical segment; sequence IYIFNLALADALATSTLPFQSVNYL. The Extracellular portion of the chain corresponds to 132 to 142; the sequence is MGTWPFGTILC. A disulfide bond links C142 and C219. A helical membrane pass occupies residues 143-165; sequence KIVISIDYYNMFTSIFTLCTMSV. Residues 166–185 lie on the Cytoplasmic side of the membrane; that stretch reads DRYIAVCHPVKALDFRTPRN. Phosphotyrosine is present on Y168. The chain crosses the membrane as a helical span at residues 186–207; sequence AKIINVCNWILSSAIGLPVMFM. Topologically, residues 208-230 are extracellular; that stretch reads ATTKYRQGSIDCTLTFSHPTWYW. Residues 231-255 traverse the membrane as a helical segment; sequence ENLLKICVFIFAFIMPVLIITVCYG. The Cytoplasmic segment spans residues 256–279; it reads LMILRLKSVRMLSGSKEKDRNLRR. Residues 280–306 form a helical membrane-spanning segment; it reads ITRMVLVVVAVFIVCWTPIHIYVIIKA. Residues 307–314 are Extracellular-facing; that stretch reads LVTIPETT. The chain crosses the membrane as a helical span at residues 315–338; that stretch reads FQTVSWHFCIALGYTNSCLNPVLY. The NPxxY; plays a role in stabilizing the activated conformation of the receptor motif lies at 334–338; sequence NPVLY. The Cytoplasmic portion of the chain corresponds to 339–400; the sequence is AFLDENFKRC…NLEAETAPLP (62 aa). A lipid anchor (S-palmitoyl cysteine) is attached at C353. A Phosphoserine modification is found at S365. Residue T372 is modified to Phosphothreonine. S377 is subject to Phosphoserine. At T396 the chain carries Phosphothreonine.

The protein belongs to the G-protein coupled receptor 1 family. In terms of assembly, forms homooligomers and heterooligomers with other GPCRs, such as OPRD1, OPRK1, OPRL1, NPFFR2, ADRA2A, SSTR2, CNR1 and CCR5 (probably in dimeric forms). Interacts with heterotrimeric G proteins; interaction with a heterotrimeric complex containing GNAI1, GNB1 and GNG2 stabilizes the active conformation of the receptor and increases its affinity for endomorphin-2, the synthetic opioid peptide DAMGO and for morphinan agonists. Interacts with PPL; the interaction disrupts agonist-mediated G-protein activation. Interacts (via C-terminus) with DNAJB4 (via C-terminus). Interacts with calmodulin; the interaction inhibits the constitutive activity of OPRM1; it abolishes basal and attenuates agonist-stimulated G-protein coupling. Interacts with FLNA, PLD2, RANBP9 and WLS and GPM6A. Interacts with RTP4. Interacts with SYP and GNAS. Interacts with RGS9, RGS17, RGS20, RGS4, PPP1R9B and HINT1. Phosphorylated. Differentially phosphorylated in basal and agonist-induced conditions. Agonist-mediated phosphorylation modulates receptor internalization. Phosphorylated by GRK2 in a agonist-dependent manner. Phosphorylation at Tyr-168 requires receptor activation, is dependent on non-receptor protein tyrosine kinase Src and results in a decrease in agonist efficacy by reducing G-protein coupling efficiency. Phosphorylated on tyrosine residues; the phosphorylation is involved in agonist-induced G-protein-independent receptor down-regulation. Phosphorylation at Ser-377 is involved in G-protein-dependent but not beta-arrestin-dependent activation of the ERK pathway. In terms of processing, ubiquitinated. A basal ubiquitination seems not to be related to degradation. Ubiquitination is increased upon formation of OPRM1:OPRD1 oligomers leading to proteasomal degradation; the ubiquitination is diminished by RTP4. Expressed in brain. Isoform 16 and isoform 17 are detected in brain.

It localises to the cell membrane. Its subcellular location is the cell projection. The protein resides in the axon. It is found in the perikaryon. The protein localises to the dendrite. It localises to the endosome. Its subcellular location is the cytoplasm. Its function is as follows. Receptor for endogenous opioids such as beta-endorphin and endomorphin. Receptor for natural and synthetic opioids including morphine, heroin, DAMGO, fentanyl, etorphine, buprenorphin and methadone. Also activated by enkephalin peptides, such as Met-enkephalin or Met-enkephalin-Arg-Phe, with higher affinity for Met-enkephalin-Arg-Phe. Agonist binding to the receptor induces coupling to an inactive GDP-bound heterotrimeric G-protein complex and subsequent exchange of GDP for GTP in the G-protein alpha subunit leading to dissociation of the G-protein complex with the free GTP-bound G-protein alpha and the G-protein beta-gamma dimer activating downstream cellular effectors. The agonist- and cell type-specific activity is predominantly coupled to pertussis toxin-sensitive G(i) and G(o) G alpha proteins, GNAI1, GNAI2, GNAI3 and GNAO1 isoforms Alpha-1 and Alpha-2, and to a lesser extent to pertussis toxin-insensitive G alpha proteins GNAZ and GNA15. They mediate an array of downstream cellular responses, including inhibition of adenylate cyclase activity and both N-type and L-type calcium channels, activation of inward rectifying potassium channels, mitogen-activated protein kinase (MAPK), phospholipase C (PLC), phosphoinositide/protein kinase (PKC), phosphoinositide 3-kinase (PI3K) and regulation of NF-kappa-B. Also couples to adenylate cyclase stimulatory G alpha proteins. The selective temporal coupling to G-proteins and subsequent signaling can be regulated by RGSZ proteins, such as RGS9, RGS17 and RGS4. Phosphorylation by members of the GPRK subfamily of Ser/Thr protein kinases and association with beta-arrestins is involved in short-term receptor desensitization. Beta-arrestins associate with the GPRK-phosphorylated receptor and uncouple it from the G-protein thus terminating signal transduction. The phosphorylated receptor is internalized through endocytosis via clathrin-coated pits which involves beta-arrestins. The activation of the ERK pathway occurs either in a G-protein-dependent or a beta-arrestin-dependent manner and is regulated by agonist-specific receptor phosphorylation. Acts as a class A G-protein coupled receptor (GPCR) which dissociates from beta-arrestin at or near the plasma membrane and undergoes rapid recycling. Receptor down-regulation pathways are varying with the agonist and occur dependent or independent of G-protein coupling. Endogenous ligands induce rapid desensitization, endocytosis and recycling. Heterooligomerization with other GPCRs can modulate agonist binding, signaling and trafficking properties. In terms of biological role, couples to GNAS and is proposed to be involved in excitatory effects. Does not bind agonists but may act through oligomerization with binding-competent OPRM1 isoforms and reduce their ligand binding activity. This Homo sapiens (Human) protein is Mu-type opioid receptor (OPRM1).